The following is a 714-amino-acid chain: DNA ligase (714 aa).

NAD(+) is bound by residues Asp47–Asp51, Ser96–Leu97, and Glu128. Catalysis depends on Lys130, which acts as the N6-AMP-lysine intermediate. Arg151, Glu188, Lys306, and Lys330 together coordinate NAD(+). Zn(2+) is bound by residues Cys435, Cys438, Cys453, and Cys459. One can recognise a BRCT domain in the interval Arg637–Ser714.

It belongs to the NAD-dependent DNA ligase family. LigA subfamily. Requires Mg(2+) as cofactor. Mn(2+) serves as cofactor.

The catalysed reaction is NAD(+) + (deoxyribonucleotide)n-3'-hydroxyl + 5'-phospho-(deoxyribonucleotide)m = (deoxyribonucleotide)n+m + AMP + beta-nicotinamide D-nucleotide.. Its function is as follows. DNA ligase that catalyzes the formation of phosphodiester linkages between 5'-phosphoryl and 3'-hydroxyl groups in double-stranded DNA using NAD as a coenzyme and as the energy source for the reaction. It is essential for DNA replication and repair of damaged DNA. The chain is DNA ligase from Rhodopseudomonas palustris (strain HaA2).